Reading from the N-terminus, the 394-residue chain is Elongation factor Tu (394 aa).

The tr-type G domain occupies 10–204 (KPHINVGTIG…HLDNYIPEPK (195 aa)). Positions 19 to 26 (GHVDHGKT) are G1. Residue 19–26 (GHVDHGKT) participates in GTP binding. Residue threonine 26 coordinates Mg(2+). Residues 60 to 64 (GITIN) form a G2 region. A G3 region spans residues 81–84 (DCPG). GTP is bound by residues 81–85 (DCPGH) and 136–139 (NKCD). Positions 136–139 (NKCD) are G4. The interval 174–176 (SAL) is G5.

The protein belongs to the TRAFAC class translation factor GTPase superfamily. Classic translation factor GTPase family. EF-Tu/EF-1A subfamily. Monomer.

It localises to the cytoplasm. The catalysed reaction is GTP + H2O = GDP + phosphate + H(+). Its function is as follows. GTP hydrolase that promotes the GTP-dependent binding of aminoacyl-tRNA to the A-site of ribosomes during protein biosynthesis. In Wigglesworthia glossinidia brevipalpis, this protein is Elongation factor Tu.